We begin with the raw amino-acid sequence, 149 residues long: Putative pre-16S rRNA nuclease (149 aa).

The protein belongs to the YqgF nuclease family.

Its subcellular location is the cytoplasm. Functionally, could be a nuclease involved in processing of the 5'-end of pre-16S rRNA. In Cupriavidus metallidurans (strain ATCC 43123 / DSM 2839 / NBRC 102507 / CH34) (Ralstonia metallidurans), this protein is Putative pre-16S rRNA nuclease.